The sequence spans 219 residues: ATP-dependent Clp protease proteolytic subunit (219 aa).

S101 acts as the Nucleophile in catalysis. Residue H126 is part of the active site.

It belongs to the peptidase S14 family. In terms of assembly, component of the chloroplastic Clp protease core complex.

The protein resides in the plastid. The protein localises to the chloroplast stroma. The catalysed reaction is Hydrolysis of proteins to small peptides in the presence of ATP and magnesium. alpha-casein is the usual test substrate. In the absence of ATP, only oligopeptides shorter than five residues are hydrolyzed (such as succinyl-Leu-Tyr-|-NHMec, and Leu-Tyr-Leu-|-Tyr-Trp, in which cleavage of the -Tyr-|-Leu- and -Tyr-|-Trp bonds also occurs).. In terms of biological role, cleaves peptides in various proteins in a process that requires ATP hydrolysis. Has a chymotrypsin-like activity. Plays a major role in the degradation of misfolded proteins. The sequence is that of ATP-dependent Clp protease proteolytic subunit from Chara vulgaris (Common stonewort).